Reading from the N-terminus, the 301-residue chain is Rhodopsin (301 aa).

Residues 1 to 18 (LHMIHLHWYQYPPMNPMM) lie on the Extracellular side of the membrane. Residues 19–43 (YPLLLIFMLFTGILCLAGNFVTIWV) form a helical membrane-spanning segment. Over 44–55 (FMNTKSLRTPAN) the chain is Cytoplasmic. The chain crosses the membrane as a helical span at residues 56 to 78 (LLVVNLAMSDFLMMFTMFPPMMV). At 79–92 (TCYYHTWTLGPTFC) the chain is on the extracellular side. Cysteines 92 and 169 form a disulfide. Residues 93–115 (QVYGFLGNLCGCASIWTMVFITF) form a helical membrane-spanning segment. Residues 116–118 (DRY) carry the 'Ionic lock' involved in activated form stabilization motif. Topologically, residues 116-134 (DRYNVIVKGVAGEPLSTKK) are cytoplasmic. The helical transmembrane segment at 135 to 155 (ASLWILIVWVLSLAWCMAPFF) threads the bilayer. Residues 156–182 (GWNRYVPEGNLTGCGTDYLSEDILSRS) are Extracellular-facing. Residue asparagine 165 is glycosylated (N-linked (GlcNAc...) asparagine). A helical membrane pass occupies residues 183–204 (YLYIYSTWVYFLPLTITIYCYV). At 205–245 (FIIKAVAAHEKGMRDQAKKMGIKSLRNEEAQKTSAECRLAK) the chain is on the cytoplasmic side. Residues 246–267 (IAMTTVALWFIAWTPYLLINWV) traverse the membrane as a helical segment. Residues 268–278 (GMFARSYLSPV) lie on the Extracellular side of the membrane. The helical transmembrane segment at 279 to 300 (YTIWGYVFAKANAVYNPIVYAI) threads the bilayer. Lysine 288 carries the post-translational modification N6-(retinylidene)lysine.

It belongs to the G-protein coupled receptor 1 family. Opsin subfamily. In terms of assembly, homodimer. Interacts with GNAQ. Post-translationally, contains one covalently linked retinal chromophore.

It is found in the cell projection. The protein localises to the rhabdomere membrane. In terms of biological role, photoreceptor required for image-forming vision at low light intensity. Can use both retinal and 3-dehydroretinal as visual pigment. Light-induced isomerization of 11-cis to all-trans retinal triggers a conformational change that activates signaling via G-proteins. Signaling via GNAQ probably mediates the activation of phospholipase C. In Procambarus milleri (Miami cave crayfish), this protein is Rhodopsin (RHO).